The sequence spans 319 residues: RWD domain-containing protein 2B (319 aa).

In terms of domain architecture, RWD spans 41 to 165; sequence AELDLLASMF…EWVREHASGY (125 aa). S275 is modified (phosphoserine).

Ubiquitous.

The protein is RWD domain-containing protein 2B (RWDD2B) of Homo sapiens (Human).